We begin with the raw amino-acid sequence, 407 residues long: MQQKAFEESRYPWQESFENVAVCLPFRCPRCGDHTRFRSLSSLRAHLEFSHSYEERTLLTKCSLFPSLKDTDLVTSSELLKPGKLQSSGNVVKQKPSYVNLYSISHEHSKDRKPFEVVAERPVSYVQTYTAMDLRADSLDGPRSGPGLPTSDTKASFEAHVREKFNRMVEAVDRTIEKRIDKLTKELAQKTAELLEVRAAFVQLTQKKQEVQRRERALNRQVDVAVEMIAVLRQRLTESEEELLRKEEEVVTFNHFLEAAAEKEVQGKARLQDFIENLVQRVELAEKQLEYYQSQQASGFGHDLSGHVLTDISSNRKPKCLSRGHPHSVCNHSDLKAHFHPKGRNHLKKAKDDRASMQPAKAIHEQAESSRDLCRPPKKGELLGFGRKGNIRPKMAKKKPTAIVNII.

Ser16 is modified (phosphoserine). The segment at 26-51 (FRCPRCGDHTRFRSLSSLRAHLEFSH) adopts a C2H2-type; degenerate zinc-finger fold. Residue Ser138 is modified to Phosphoserine. Residues 169–296 (VEAVDRTIEK…KQLEYYQSQQ (128 aa)) adopt a coiled-coil conformation. Thr175 bears the Phosphothreonine mark. Residues 347 to 392 (LKKAKDDRASMQPAKAIHEQAESSRDLCRPPKKGELLGFGRKGNIR) are disordered. A compositionally biased stretch (basic and acidic residues) spans 362-381 (AIHEQAESSRDLCRPPKKGE). Ser369 is modified (phosphoserine).

As to quaternary structure, homodimers. Interacts with NDE1 and NDEL1. Interacts with DISC1. Interacts with PARP1. Interacts with MCRS1.

It is found in the cytoplasm. It localises to the cytoskeleton. The protein localises to the microtubule organizing center. Its subcellular location is the centrosome. Involved in the regulation of neurogenesis. Negatively regulates neurite outgrowth. Involved in the morphogenesis of basket cells in the somatosensory cortex during embryogenesis. Involved in the positive regulation of oligodendrocyte differentiation during postnatal growth. Involved in dendritic arborization, morphogenesis of spine density dendrite, and establishment of postsynaptic dendrite density in cortical pyramidal neurons. Involved in homologous recombination (HR) repair pathway. Required for proper resolution of DNA double-strand breaks (DSBs) by HR. Is required for recovery of stalled replication forks, and directly contributes to genomic stability. Interacts with PARP1 and mediates MRE11-dependent DNA end resection during replication fork recovery. Contributes to genomic stability by preventing telomere dysfunction. In Pongo abelii (Sumatran orangutan), this protein is Protein ZNF365 (ZNF365).